We begin with the raw amino-acid sequence, 433 residues long: uncharacterized protein (433 aa).

The signal sequence occupies residues Met-1–Gly-28. Topologically, residues Phe-29–Gly-274 are extracellular. The span at Gly-235–Ser-250 shows a compositional bias: polar residues. The disordered stretch occupies residues Gly-235–Ala-266. Residues Asn-251 to Ala-266 are compositionally biased toward basic and acidic residues. The helical transmembrane segment at Val-275–Leu-295 threads the bilayer. Residues Leu-296 to Gly-433 are Cytoplasmic-facing. Disordered regions lie at residues Glu-320–Asp-340 and Lys-413–Gly-433.

In terms of tissue distribution, component of the acid-insoluble and acid-soluble organic matrix of the aragonitic skeleton (at protein level).

Its subcellular location is the membrane. This is an uncharacterized protein from Acropora millepora (Staghorn coral).